The following is a 306-amino-acid chain: Acetylglutamate kinase (306 aa).

Residues G68 to G69, R90, and N195 each bind substrate.

Belongs to the acetylglutamate kinase family. ArgB subfamily.

It localises to the cytoplasm. It carries out the reaction N-acetyl-L-glutamate + ATP = N-acetyl-L-glutamyl 5-phosphate + ADP. It functions in the pathway amino-acid biosynthesis; L-arginine biosynthesis; N(2)-acetyl-L-ornithine from L-glutamate: step 2/4. Functionally, catalyzes the ATP-dependent phosphorylation of N-acetyl-L-glutamate. This Chromohalobacter salexigens (strain ATCC BAA-138 / DSM 3043 / CIP 106854 / NCIMB 13768 / 1H11) protein is Acetylglutamate kinase.